We begin with the raw amino-acid sequence, 561 residues long: DNA ligase B (561 aa).

Lys-125 acts as the N6-AMP-lysine intermediate in catalysis.

Belongs to the NAD-dependent DNA ligase family. LigB subfamily.

It carries out the reaction NAD(+) + (deoxyribonucleotide)n-3'-hydroxyl + 5'-phospho-(deoxyribonucleotide)m = (deoxyribonucleotide)n+m + AMP + beta-nicotinamide D-nucleotide.. Its function is as follows. Catalyzes the formation of phosphodiester linkages between 5'-phosphoryl and 3'-hydroxyl groups in double-stranded DNA using NAD as a coenzyme and as the energy source for the reaction. The polypeptide is DNA ligase B (Salmonella enteritidis PT4 (strain P125109)).